We begin with the raw amino-acid sequence, 292 residues long: GTP cyclohydrolase FolE2 (292 aa).

The protein belongs to the GTP cyclohydrolase IV family.

It catalyses the reaction GTP + H2O = 7,8-dihydroneopterin 3'-triphosphate + formate + H(+). It participates in cofactor biosynthesis; 7,8-dihydroneopterin triphosphate biosynthesis; 7,8-dihydroneopterin triphosphate from GTP: step 1/1. Its function is as follows. Converts GTP to 7,8-dihydroneopterin triphosphate. The chain is GTP cyclohydrolase FolE2 from Staphylococcus saprophyticus subsp. saprophyticus (strain ATCC 15305 / DSM 20229 / NCIMB 8711 / NCTC 7292 / S-41).